Consider the following 256-residue polypeptide: UPF0246 protein Bpet1601 (256 aa).

Belongs to the UPF0246 family.

The protein is UPF0246 protein Bpet1601 of Bordetella petrii (strain ATCC BAA-461 / DSM 12804 / CCUG 43448).